The chain runs to 105 residues: Putative ferredoxin-3 (105 aa).

4Fe-4S ferredoxin-type domains follow at residues 17–46 (YLTAIDAMTCIGCGRCFKVCSREVMHLHGI) and 70–100 (TIMVVDHAGRCIGCGACARVCPKNCQTHVAA). 8 residues coordinate [4Fe-4S] cluster: Cys-26, Cys-29, Cys-32, Cys-36, Cys-80, Cys-83, Cys-86, and Cys-90.

The cofactor is [4Fe-4S] cluster.

In terms of biological role, ferredoxins are iron-sulfur proteins that transfer electrons in a wide variety of metabolic reactions. The polypeptide is Putative ferredoxin-3 (fdxB) (Sinorhizobium fredii (strain NBRC 101917 / NGR234)).